A 262-amino-acid polypeptide reads, in one-letter code: L-aspartate dehydrogenase (262 aa).

NAD(+)-binding residues include alanine 128 and asparagine 183. The active site involves histidine 213.

Belongs to the L-aspartate dehydrogenase family.

The catalysed reaction is L-aspartate + NADP(+) + H2O = oxaloacetate + NH4(+) + NADPH + H(+). It catalyses the reaction L-aspartate + NAD(+) + H2O = oxaloacetate + NH4(+) + NADH + H(+). Its pathway is cofactor biosynthesis; NAD(+) biosynthesis; iminoaspartate from L-aspartate (dehydrogenase route): step 1/1. In terms of biological role, specifically catalyzes the NAD or NADP-dependent dehydrogenation of L-aspartate to iminoaspartate. The polypeptide is L-aspartate dehydrogenase (Methanopyrus kandleri (strain AV19 / DSM 6324 / JCM 9639 / NBRC 100938)).